The sequence spans 184 residues: Transcription termination/antitermination protein NusG (184 aa).

Positions 133-163 (EGDQVRVVSGPFADFTGTVTEINPERGKVKV) constitute a KOW domain.

Belongs to the NusG family.

Participates in transcription elongation, termination and antitermination. The polypeptide is Transcription termination/antitermination protein NusG (Thermus thermophilus (strain ATCC 27634 / DSM 579 / HB8)).